A 120-amino-acid chain; its full sequence is MTENRRIKKVNSLLREAIANVILKDVKHPKISNQWITVTRVCLSKDLHSARVYVSIMPHENTSAETLDALKASAGFIAYKASKGVVLKYFPEIHFYIEDIFSPQDHIENLLWKIREQDKN.

This sequence belongs to the RbfA family. In terms of assembly, monomer. Binds 30S ribosomal subunits, but not 50S ribosomal subunits or 70S ribosomes.

It localises to the cytoplasm. One of several proteins that assist in the late maturation steps of the functional core of the 30S ribosomal subunit. Associates with free 30S ribosomal subunits (but not with 30S subunits that are part of 70S ribosomes or polysomes). Required for efficient processing of 16S rRNA. May interact with the 5'-terminal helix region of 16S rRNA. This Chlamydia caviae (strain ATCC VR-813 / DSM 19441 / 03DC25 / GPIC) (Chlamydophila caviae) protein is Ribosome-binding factor A.